Here is a 153-residue protein sequence, read N- to C-terminus: uncharacterized protein (153 aa).

2 helical membrane passes run 16-36 and 97-117; these read ILAC…ILEI and ALTT…CIIC.

Its subcellular location is the membrane. This is an uncharacterized protein from Human herpesvirus 6A (strain Uganda-1102) (HHV-6 variant A).